We begin with the raw amino-acid sequence, 415 residues long: Packaging protein 3 (415 aa).

2 disordered regions span residues 1–56 (MHPV…RRRA) and 66–85 (EGLARLGAPSPERHPRVQLK). Residues 1 to 173 (MHPVLRQMRP…VNQEINFQKS (173 aa)) form an interaction with packaging protein 1 region. Low complexity predominate over residues 31–46 (PTASGGATSAADAAAD). A Phosphoserine; by host modification is found at Ser-75. Over residues 76–85 (PERHPRVQLK) the composition is skewed to basic and acidic residues. Residue Ser-360 is modified to Phosphoserine; by host. Residues 381-394 (GAGPGLAVAPARAG) are compositionally biased toward low complexity. Positions 381–415 (GAGPGLAVAPARAGNVGGVEEYDEDDEYEPEDGEY) are disordered. The segment covering 400 to 415 (EEYDEDDEYEPEDGEY) has biased composition (acidic residues).

Belongs to the adenoviridae packaging protein 3 family. In terms of assembly, part of the genome packaging complex composed of packaging proteins 1, 2 and 3; this complex specifically binds to the packaging sequence on the left end of viral genomic DNA and performs packaging of the viral genome. Interacts with hexon-linking protein IIIa; this interaction is required to promote correct genome packaging. Post-translationally, cleaved at different sites by the viral protease during virion maturation.

The protein localises to the host nucleus. In terms of biological role, involved in viral genome packaging through its interaction with packaging proteins 1 and 2. After proteolytic cleavage by adenovirus protease, L1 52/55k protein is removed from the capsid during viral maturation. This chain is Packaging protein 3, found in Human adenovirus C serotype 2 (HAdV-2).